The primary structure comprises 320 residues: MKMINKLIVPVTASALLLGACGASATDSKENTLISSKAGDVTVADTMKKIGKDQIANASFTEMLNKILADKYKNKVNDKKIDEQIEKMQKQYGGKDKFEKALQQQGLTADKYKENLRTAAYHKELLSDKIKISDSEIKEDSKKASHILIKVKSKKSDKEGLDDKEAKQKAEEIQKEVSKDPSKFGEIAKKESMDTGSAKKDGELGYVLKGQTDKDFEKALFKLKDGEVSEVVKSSFGYHIIKADKPTDFNSEKQSLKEKLVDQKVQKNPKLLTDAYKDLLKEYDVDFKDRDIKSVVEDKILNPEKLKQGGAQGGQSGMSQ.

Positions Met1–Ala20 are cleaved as a signal peptide. Cys21 is lipidated: N-palmitoyl cysteine. A lipid anchor (S-diacylglycerol cysteine) is attached at Cys21. A PpiC domain is found at Glu139–Lys245. The tract at residues Glu159–Ala198 is disordered.

It belongs to the PrsA family.

The protein resides in the cell membrane. The enzyme catalyses [protein]-peptidylproline (omega=180) = [protein]-peptidylproline (omega=0). Its function is as follows. Plays a major role in protein secretion by helping the post-translocational extracellular folding of several secreted proteins. This is Foldase protein PrsA from Staphylococcus aureus (strain Mu3 / ATCC 700698).